The following is a 122-amino-acid chain: Interferon alpha-inducible protein 27, mitochondrial (122 aa).

Residues 1 to 33 (MEASALTSSAVTSVAKVVRVASGSAVVLPLARI) constitute a mitochondrion transit peptide. Residues 34–57 (ATVVIGGVVAMAAVPMVLSAMGFT) traverse the membrane as a helical segment. Lys-69 is covalently cross-linked (Glycyl lysine isopeptide (Lys-Gly) (interchain with G-Cter in ubiquitin)). A run of 2 helical transmembrane segments spans residues 71–91 (MSAA…VATL) and 99–119 (LSGL…AVIA). Residues 76-122 (IANGGGVASGSLVATLQSLGATGLSGLTKFILGSIGSAIAAVIARFY) form a mediates interaction with SKP2 and hepatitis C virus non-structural protein NS5A region. The required for hepatitis C virus non-structural protein NS5A degradation stretch occupies residues 103-112 (TKFILGSIGS).

Belongs to the IFI6/IFI27 family. As to quaternary structure, homodimer. Interacts with hepatitis C virus/HCV non-structural protein NS5A; promotes the ubiquitin-mediated proteasomal degradation of NS5A. Interacts with SKP2; promotes the ubiquitin-mediated proteasomal degradation of NS5A. Interacts with NR4A1. May interact with BCL2. Post-translationally, ubiquitinated by TRIM21 via 'Lys-6'-linked ubiquitin chains leading to IFI27 mitochondrial migration.

It is found in the mitochondrion membrane. Its subcellular location is the nucleus inner membrane. It localises to the endoplasmic reticulum membrane. Its function is as follows. Probable adapter protein involved in different biological processes. Part of the signaling pathways that lead to apoptosis. Involved in type-I interferon-induced apoptosis characterized by a rapid and robust release of cytochrome C from the mitochondria and activation of BAX and caspases 2, 3, 6, 8 and 9. Also functions in TNFSF10-induced apoptosis. May also have a function in the nucleus, where it may be involved in the interferon-induced negative regulation of the transcriptional activity of NR4A1, NR4A2 and NR4A3 through the enhancement of XPO1-mediated nuclear export of these nuclear receptors. May thereby play a role in the vascular response to injury. In the innate immune response, has an antiviral activity towards hepatitis C virus/HCV. May prevent the replication of the virus by recruiting both the hepatitis C virus non-structural protein 5A/NS5A and the ubiquitination machinery via SKP2, promoting the ubiquitin-mediated proteasomal degradation of NS5A. Also promotes virus-induced pyroptosis by activating CASP3 in the mitochondria after 'Lys-6'-linked ubiquitination by TRIM21. This is Interferon alpha-inducible protein 27, mitochondrial from Homo sapiens (Human).